Consider the following 352-residue polypeptide: Fe(3+) ions import ATP-binding protein FbpC (352 aa).

An ABC transporter domain is found at 5–239; sequence LHIGHLSKSF…PADLDAALFI (235 aa). 37–44 contacts ATP; sequence GASGCGKT.

This sequence belongs to the ABC transporter superfamily. Fe(3+) ion importer (TC 3.A.1.10) family. In terms of assembly, the complex is composed of two ATP-binding proteins (FbpC), two transmembrane proteins (FbpB) and a solute-binding protein (FbpA).

The protein localises to the cell inner membrane. It catalyses the reaction Fe(3+)(out) + ATP + H2O = Fe(3+)(in) + ADP + phosphate + H(+). In terms of biological role, part of the ABC transporter complex FbpABC involved in Fe(3+) ions import. Responsible for energy coupling to the transport system. The sequence is that of Fe(3+) ions import ATP-binding protein FbpC from Neisseria meningitidis serogroup A / serotype 4A (strain DSM 15465 / Z2491).